We begin with the raw amino-acid sequence, 332 residues long: Olfactory receptor 10G6 (332 aa).

Residues 1-46 are Extracellular-facing; it reads MLEGVEHLLLLLLLTDVNSKELQSGNQTSVSHFILVGLHHPPQLGA. N-linked (GlcNAc...) asparagine glycosylation occurs at asparagine 26. The chain crosses the membrane as a helical span at residues 47–67; that stretch reads PLFLAFLVIYLLTVSGNGLII. Residues 68–75 are Cytoplasmic-facing; the sequence is LTVLVDIR. A helical membrane pass occupies residues 76 to 96; that stretch reads LHRPMCLFLCHLSFLDMTISC. Residues 97–120 lie on the Extracellular side of the membrane; it reads AIVPKMLAGFLLGSRIISFGGCVI. A disulfide bridge connects residues cysteine 118 and cysteine 210. Residues 121 to 141 traverse the membrane as a helical segment; that stretch reads QLFSFHFLGCTECFLYTLMAY. At 142–160 the chain is on the cytoplasmic side; that stretch reads DRFLAICKPLHYATIMTHR. Residues 161-181 form a helical membrane-spanning segment; that stretch reads VCNSLALGTWLGGTIHSLFQT. At 182–218 the chain is on the extracellular side; sequence SFVFRLPFCGPNRVDYIFCDIPAMLRLACADTAINEL. Residues 219–238 form a helical membrane-spanning segment; that stretch reads VTFADIGFLALTCFMLILTS. Residues 239–258 are Cytoplasmic-facing; sequence YGYIVAAILRIPSADGRRNA. A helical membrane pass occupies residues 259–279; the sequence is FSTCAAHLTVVIVYYVPCTFI. Over 280–290 the chain is Extracellular; that stretch reads YLRPCSQEPLD. A helical membrane pass occupies residues 291–311; it reads GVVAVFYTVITPLLNSIIYTL. Over 312–332 the chain is Cytoplasmic; sequence CNKEMKAALQRLGGHKEVQPH.

The protein belongs to the G-protein coupled receptor 1 family.

It is found in the cell membrane. Its function is as follows. Odorant receptor. The polypeptide is Olfactory receptor 10G6 (OR10G6) (Homo sapiens (Human)).